The sequence spans 279 residues: Ribosomal RNA small subunit methyltransferase A (279 aa).

Positions 15, 17, 42, 64, 89, and 109 each coordinate S-adenosyl-L-methionine.

The protein belongs to the class I-like SAM-binding methyltransferase superfamily. rRNA adenine N(6)-methyltransferase family. RsmA subfamily.

It is found in the cytoplasm. It catalyses the reaction adenosine(1518)/adenosine(1519) in 16S rRNA + 4 S-adenosyl-L-methionine = N(6)-dimethyladenosine(1518)/N(6)-dimethyladenosine(1519) in 16S rRNA + 4 S-adenosyl-L-homocysteine + 4 H(+). Specifically dimethylates two adjacent adenosines (A1518 and A1519) in the loop of a conserved hairpin near the 3'-end of 16S rRNA in the 30S particle. May play a critical role in biogenesis of 30S subunits. The polypeptide is Ribosomal RNA small subunit methyltransferase A (Prochlorococcus marinus (strain SARG / CCMP1375 / SS120)).